Reading from the N-terminus, the 178-residue chain is Nucleoplasmin-3 (178 aa).

Alanine 2 carries the N-acetylalanine modification. Residues serine 13 and serine 16 each carry the phosphoserine modification. Arginine 27 is subject to Omega-N-methylarginine. The disordered stretch occupies residues 141–178 (TMSNDVSEEESEEEEEDSDEEEVELCPILPAKKQGGRP). The segment covering 146–164 (VSEEESEEEEEDSDEEEVE) has biased composition (acidic residues). Phosphoserine is present on residues serine 147, serine 151, and serine 158.

The protein belongs to the nucleoplasmin family. As to quaternary structure, interacts with NPM (via N-terminus). Forms a pentamer with NPM at a ratio 4:1 (NPM3/NPM). Two pentamers form a decamer. In terms of processing, phosphorylated. In terms of tissue distribution, ubiquitous.

The protein localises to the nucleus. It localises to the nucleolus. Functionally, plays a role in the regulation of diverse cellular processes such as ribosome biogenesis, chromatin remodeling or protein chaperoning. Modulates the histone chaperone function and the RNA-binding activity of nucleolar phosphoprotein B23/NPM. Efficiently mediates chromatin remodeling when included in a pentamer containing NPM3 and NPM. The protein is Nucleoplasmin-3 (NPM3) of Homo sapiens (Human).